We begin with the raw amino-acid sequence, 885 residues long: MHKNNTTFLSRVFGINSRNIDVHNPLFADDSVIPLYDQNQSAYYDNAYSDYSSDEEDSKPRTSRQTDSNLHMTDHSGDGNDPFNQMDNSSRFSNSSSFHYNNTDQEDDNPELLLLQDEDSSLNRKNLDNSDFQSFAKKTFNQIPKIKFQLPKKEDYPTSHRQPPDIENQNGTLKSSVKKQIHFLDPMDKALWMWSNVSNLDTFLHQVYDYYTGNGFNCIMMNKFTELFTVVFIVWLFSFMGNCIDYDKLMNDRNVYQFSQVKIDKCYSKIGFFPQKLIYWLFFIGLCLKLYQIFLDYLVLKDMKLFFNLLLGLSDDELQTISWGLVVKRIMILRDKNINAIVSQNTDLTSRKRMNAHDIANRILRKENYMIAMYNKSILDLDIELPLIGKVQLLTNTLQWNLNIAILDYFFDSETGQINLPALKERNRHTISTELKKRLIFCGIINIVLAPILSIYFIMYYFLKFFYDFKTNPADISSREYSPYARWKLREFNELPHIFNRRLNISTESSNKYINQFPKETTTALLKFIMFISGSIVGVLVIVTILDPEFFLNFELTPGRTVLFYVSTLGAIFTICKNSIPDDTLVFDPEVSLRYLSQFTHYLPQEWEGKYHTEEVKNDFCKLYTLKLYLVGKEILSWLFLPYILCYKLPECADTISDFFREFSVHVDGLGYVCTFAMFQFNNQHNENGNANVHQNGNGNGGVPSAKSKSKKVPNPNRFTTKPSMRDMENDDKMIKSYMYFLESYGNDEIVQHQQALNRSLIYSTEISPTSGDDLNDSNILGLRQRNVATTGKRQNSIGNGLIYNGQNKRLSIGEAKTNVYSNPIASTVLDKDLQYKLANSYILNGMPGLNEANQPADRKNERKYSNDSPGVMKLVDKISQQHKA.

Over 1–223 (MHKNNTTFLS…NGFNCIMMNK (223 aa)) the chain is Cytoplasmic. Positions 49-108 (SDYSSDEEDSKPRTSRQTDSNLHMTDHSGDGNDPFNQMDNSSRFSNSSSFHYNNTDQEDD) are disordered. Over residues 88 to 98 (NSSRFSNSSSF) the composition is skewed to low complexity. A helical membrane pass occupies residues 224 to 244 (FTELFTVVFIVWLFSFMGNCI). Residues 245 to 279 (DYDKLMNDRNVYQFSQVKIDKCYSKIGFFPQKLIY) lie on the Lumenal side of the membrane. The helical transmembrane segment at 280–300 (WLFFIGLCLKLYQIFLDYLVL) threads the bilayer. At 301-438 (KDMKLFFNLL…HTISTELKKR (138 aa)) the chain is on the cytoplasmic side. Residues 439–459 (LIFCGIINIVLAPILSIYFIM) lie within the membrane without spanning it. The Cytoplasmic segment spans residues 460-524 (YYFLKFFYDF…NQFPKETTTA (65 aa)). The helical transmembrane segment at 525-545 (LLKFIMFISGSIVGVLVIVTI) threads the bilayer. Residues 546 to 555 (LDPEFFLNFE) are Lumenal-facing. A helical membrane pass occupies residues 556-576 (LTPGRTVLFYVSTLGAIFTIC). Over 577–625 (KNSIPDDTLVFDPEVSLRYLSQFTHYLPQEWEGKYHTEEVKNDFCKLYT) the chain is Cytoplasmic. Residues 626 to 646 (LKLYLVGKEILSWLFLPYILC) lie within the membrane without spanning it. The Cytoplasmic portion of the chain corresponds to 647-885 (YKLPECADTI…VDKISQQHKA (239 aa)). A compositionally biased stretch (low complexity) spans 688–697 (NGNANVHQNG). Disordered stretches follow at residues 688–726 (NGNANVHQNGNGNGGVPSAKSKSKKVPNPNRFTTKPSMR) and 847–871 (MPGLNEANQPADRKNERKYSNDSPG). Residues 857–866 (ADRKNERKYS) show a composition bias toward basic and acidic residues.

The protein belongs to the ATG9 family. Homotrimer; forms a homotrimer with a central pore that forms a path between the two membrane leaflets. Post-translationally, phosphorylated by ATG1. ATG1 phosphorylation is required for preautophagosome elongation.

It is found in the preautophagosomal structure membrane. The protein localises to the cytoplasmic vesicle membrane. The protein resides in the vacuole membrane. Its subcellular location is the golgi apparatus membrane. It localises to the endoplasmic reticulum membrane. It carries out the reaction a 1,2-diacyl-sn-glycero-3-phosphocholine(in) = a 1,2-diacyl-sn-glycero-3-phosphocholine(out). The enzyme catalyses a 1,2-diacyl-sn-glycero-3-phospho-L-serine(in) = a 1,2-diacyl-sn-glycero-3-phospho-L-serine(out). The catalysed reaction is a 1,2-diacyl-sn-glycero-3-phosphoethanolamine(in) = a 1,2-diacyl-sn-glycero-3-phosphoethanolamine(out). It catalyses the reaction a 1,2-diacyl-sn-glycero-3-phospho-(1D-myo-inositol-3-phosphate)(in) = a 1,2-diacyl-sn-glycero-3-phospho-(1D-myo-inositol-3-phosphate)(out). Phospholipid scramblase involved in autophagy and cytoplasm to vacuole transport (Cvt) vesicle formation. Cycles between the preautophagosomal structure/phagophore assembly site (PAS) and the cytoplasmic vesicle pool and supplies membrane for the growing autophagosome. Lipid scramblase activity plays a key role in preautophagosomal structure/phagophore assembly by distributing the phospholipids that arrive through ATG2 from the cytoplasmic to the luminal leaflet of the bilayer, thereby driving autophagosomal membrane expansion. Required for mitophagy. Also involved in endoplasmic reticulum-specific autophagic process and is essential for the survival of cells subjected to severe ER stress. Different machineries are required for anterograde trafficking to the PAS during either the Cvt pathway or bulk autophagy and for retrograde trafficking. Essential for the formation of the sequestering membranes and assembly of the micropexophagy-specific membrane apparatus (MIPA) which mediates the fusion of the sequestering membranes and incorporation of the peroxisomes into the vacuole during micropexophagy. The polypeptide is Autophagy-related protein 9 (ATG9) (Komagataella pastoris (Yeast)).